The primary structure comprises 418 residues: AP-3 complex subunit mu-2 (418 aa).

Positions 176 to 417 (NNEAYFDVVE…MTKAGKFQVR (242 aa)) constitute an MHD domain.

It belongs to the adaptor complexes medium subunit family. In terms of assembly, adaptor protein complex 3 (AP-3) is a heterotetramer composed of two large adaptins (delta-type subunit AP3D1 and beta-type subunit AP3B1 or AP3B2), a medium adaptin (mu-type subunit AP3M1 or AP3M2) and a small adaptin (sigma-type subunit APS1 or AP3S2). AP-3 associates with the BLOC-1 complex.

The protein resides in the golgi apparatus. It is found in the cytoplasmic vesicle membrane. Its function is as follows. Component of the adaptor complexes which link clathrin to receptors in coated vesicles. Clathrin-associated protein complexes are believed to interact with the cytoplasmic tails of membrane proteins, leading to their selection and concentration. Ap47 is a subunit of the plasma membrane adaptor. In concert with the BLOC-1 complex, AP-3 is required to target cargos into vesicles assembled at cell bodies for delivery into neurites and nerve terminals. The chain is AP-3 complex subunit mu-2 (Ap3m2) from Mus musculus (Mouse).